The chain runs to 105 residues: uncharacterized protein (105 aa).

The signal sequence occupies residues 1-19 (MKLVFIFATAAIMGVVVYG).

This is an uncharacterized protein from Magallana gigas (Pacific oyster).